Here is a 248-residue protein sequence, read N- to C-terminus: MKILLTNDDGVRAPGLAALAEAMGAIGEVYVVAPDREQSAVGHALTLHHPLRATRIENNIFAVDGTPTDCVNLGIHSLLSFKPDIVVSGINRGGNLGDDITYSGTVSAAMEATLMGIPAIAVSLVTQNDGGNYSAAAAFVVKLAGIVSREGLPDDTFLNVNVPDLPAEQLRHPVITTQGKRSYEGTIVDKVDPRGRSYYWIGTVDLNFSDIEGSDYNAVSRGHISITPLHLDLTNYNSLAALKRWDLT.

Residues D8, D9, S39, and N91 each contribute to the a divalent metal cation site.

The protein belongs to the SurE nucleotidase family. It depends on a divalent metal cation as a cofactor.

It localises to the cytoplasm. The catalysed reaction is a ribonucleoside 5'-phosphate + H2O = a ribonucleoside + phosphate. Its function is as follows. Nucleotidase that shows phosphatase activity on nucleoside 5'-monophosphates. The sequence is that of 5'-nucleotidase SurE from Geotalea uraniireducens (strain Rf4) (Geobacter uraniireducens).